The sequence spans 249 residues: DNA polymerase sliding clamp (249 aa).

It belongs to the PCNA family. As to quaternary structure, homotrimer. The subunits circularize to form a toroid; DNA passes through its center. Replication factor C (RFC) is required to load the toroid on the DNA.

Sliding clamp subunit that acts as a moving platform for DNA processing. Responsible for tethering the catalytic subunit of DNA polymerase and other proteins to DNA during high-speed replication. The protein is DNA polymerase sliding clamp of Thermococcus onnurineus (strain NA1).